We begin with the raw amino-acid sequence, 71 residues long: Conotoxin LvVIB (71 aa).

The N-terminal stretch at 1–17 is a signal peptide; sequence VLIIAVLFLTASELVTA. A propeptide spanning residues 18-41 is cleaved from the precursor; that stretch reads DYTRDKWQYRAASLRDAMRNFRDT. 3 cysteine pairs are disulfide-bonded: Cys-43–Cys-57, Cys-50–Cys-62, and Cys-56–Cys-69.

Belongs to the conotoxin O1 superfamily. In terms of tissue distribution, expressed by the venom duct.

It is found in the secreted. This Conus lividus (Livid cone) protein is Conotoxin LvVIB.